Here is a 258-residue protein sequence, read N- to C-terminus: TLC domain-containing protein 4-A (258 aa).

6 helical membrane passes run L5–I25, F52–D72, F85–L105, Y116–L132, P171–I191, and I212–W232. In terms of domain architecture, TLC spans G43–K245.

This sequence belongs to the TLCD4 family.

Its subcellular location is the membrane. This Xenopus laevis (African clawed frog) protein is TLC domain-containing protein 4-A (tlcd4-a).